The primary structure comprises 226 residues: UPF0758 protein GWCH70_2550 (226 aa).

The MPN domain occupies 104 to 226; the sequence is VIRSPEDGAK…FVSLKEKGYV (123 aa). Zn(2+) contacts are provided by His-175, His-177, and Asp-188. A JAMM motif motif is present at residues 175–188; that stretch reads HNHPSGDPTPSRED.

The protein belongs to the UPF0758 family.

This chain is UPF0758 protein GWCH70_2550, found in Geobacillus sp. (strain WCH70).